Here is a 337-residue protein sequence, read N- to C-terminus: Beta-hexosaminidase (337 aa).

Substrate-binding positions include Asp62, Arg70, Arg133, and Lys163–His164. The active-site Proton donor/acceptor is the His176. The Nucleophile role is filled by Asp248.

This sequence belongs to the glycosyl hydrolase 3 family. NagZ subfamily.

The protein localises to the cytoplasm. It catalyses the reaction Hydrolysis of terminal non-reducing N-acetyl-D-hexosamine residues in N-acetyl-beta-D-hexosaminides.. Its pathway is cell wall biogenesis; peptidoglycan recycling. Functionally, plays a role in peptidoglycan recycling by cleaving the terminal beta-1,4-linked N-acetylglucosamine (GlcNAc) from peptide-linked peptidoglycan fragments, giving rise to free GlcNAc, anhydro-N-acetylmuramic acid and anhydro-N-acetylmuramic acid-linked peptides. The sequence is that of Beta-hexosaminidase from Psychromonas ingrahamii (strain DSM 17664 / CCUG 51855 / 37).